The sequence spans 457 residues: Cysteine--tRNA ligase (457 aa).

Cys-28 provides a ligand contact to Zn(2+). Positions 30–40 match the 'HIGH' region motif; the sequence is PTVYDTAHIGN. Zn(2+) is bound by residues Cys-212, His-237, and Glu-241. The short motif at 270–274 is the 'KMSKS' region element; the sequence is KMSKS. Lys-273 lines the ATP pocket.

It belongs to the class-I aminoacyl-tRNA synthetase family. In terms of assembly, monomer. The cofactor is Zn(2+).

It is found in the cytoplasm. It carries out the reaction tRNA(Cys) + L-cysteine + ATP = L-cysteinyl-tRNA(Cys) + AMP + diphosphate. The polypeptide is Cysteine--tRNA ligase (Wolbachia sp. subsp. Drosophila simulans (strain wRi)).